A 341-amino-acid chain; its full sequence is 2-keto-4-carboxy-3-hexenedioate hydratase (341 aa).

Positions 8 and 10 each coordinate Zn(2+). 71 to 73 contributes to the substrate binding site; the sequence is RAS. His-178 contributes to the Zn(2+) binding site. Residues Tyr-194 and His-223 each coordinate substrate. Glu-284 functions as the Proton donor/acceptor in the catalytic mechanism. Residue Arg-290 coordinates substrate.

Belongs to the metallo-dependent hydrolases superfamily. In terms of assembly, homodimer. Zn(2+) is required as a cofactor.

It catalyses the reaction (3Z)-2-oxo-4-carboxy-3-hexenedioate + H2O = (2S)-2-hydroxy-4-oxobutane-1,2,4-tricarboxylate. It participates in secondary metabolite metabolism; lignin degradation. Functionally, contributes to the degradation of lignin at the level of the protocatechuate 4,5-cleavage pathway. Catalyzes the hydration of the double bond of (3Z)-2-keto-4-carboxy-3-hexenedioate (KCH) to (4S)-4-carboxy-4-hydroxy-2-oxoadipate (CHA, also named (2S)-2-hydroxy-4-oxobutane-1,2,4-tricarboxylate). Is involved in the catabolism of both vanillate and syringate. The sequence is that of 2-keto-4-carboxy-3-hexenedioate hydratase from Sphingobium sp. (strain NBRC 103272 / SYK-6).